A 122-amino-acid polypeptide reads, in one-letter code: Large ribosomal subunit protein uL14 (122 aa).

It belongs to the universal ribosomal protein uL14 family. Part of the 50S ribosomal subunit. Forms a cluster with proteins L3 and L19. In the 70S ribosome, L14 and L19 interact and together make contacts with the 16S rRNA in bridges B5 and B8.

Functionally, binds to 23S rRNA. Forms part of two intersubunit bridges in the 70S ribosome. This Polynucleobacter necessarius subsp. necessarius (strain STIR1) protein is Large ribosomal subunit protein uL14.